The sequence spans 148 residues: UPF0260 protein PM0539 (148 aa).

The protein belongs to the UPF0260 family.

In Pasteurella multocida (strain Pm70), this protein is UPF0260 protein PM0539.